A 207-amino-acid polypeptide reads, in one-letter code: Coiled-coil domain-containing protein 25 (207 aa).

Residues 1 to 104 (MVFYFTSAVV…SNLKKTADMD (104 aa)) are Extracellular-facing. The segment at 20–24 (KDKYE) is DNA-binding. The helical transmembrane segment at 105–121 (IGQIGFHRQKEVKIVAV) threads the bilayer. A coiled-coil region spans residues 112–189 (RQKEVKIVAV…EDLKNYTSLM (78 aa)). At 122 to 207 (EKKINEIVNR…EDGYDSDDFM (86 aa)) the chain is on the cytoplasmic side. Basic and acidic residues predominate over residues 140–183 (YPDLAAEKESRDREERNEKKAQIQEQKKKEKEEVKKKKEMEDLK). A disordered region spans residues 140 to 207 (YPDLAAEKES…EDGYDSDDFM (68 aa)). A compositionally biased stretch (polar residues) spans 184-198 (NYTSLMKSDNMTTNE). The residue at position 203 (S203) is a Phosphoserine.

Belongs to the CCDC25 family. As to quaternary structure, interacts (via cytoplasmic region) with ILK.

The protein resides in the cell membrane. It is found in the endomembrane system. In terms of biological role, transmembrane receptor that senses neutrophil extracellular traps (NETs) and triggers the ILK-PARVB pathway to enhance cell motility. NETs are mainly composed of DNA fibers and are released by neutrophils to bind pathogens during inflammation. Specifically binds NETs on its extracellular region, in particular the 8-OHdG-enriched DNA present in NETs, and recruits ILK, initiating the ILK-PARVB cascade to induce cytoskeleton rearrangement and directional migration of cells. The chain is Coiled-coil domain-containing protein 25 from Danio rerio (Zebrafish).